A 567-amino-acid chain; its full sequence is Oxygen-dependent choline dehydrogenase (567 aa).

4-33 (DYIIIGAGSAGNVLAARLTEDADVTVLLLE) is an FAD binding site. The Proton acceptor role is filled by His-473.

It belongs to the GMC oxidoreductase family. FAD serves as cofactor.

The catalysed reaction is choline + A = betaine aldehyde + AH2. The enzyme catalyses betaine aldehyde + NAD(+) + H2O = glycine betaine + NADH + 2 H(+). The protein operates within amine and polyamine biosynthesis; betaine biosynthesis via choline pathway; betaine aldehyde from choline (cytochrome c reductase route): step 1/1. In terms of biological role, involved in the biosynthesis of the osmoprotectant glycine betaine. Catalyzes the oxidation of choline to betaine aldehyde and betaine aldehyde to glycine betaine at the same rate. In Yersinia pestis bv. Antiqua (strain Antiqua), this protein is Oxygen-dependent choline dehydrogenase.